A 371-amino-acid chain; its full sequence is MDKKDMEREFYMTGGDGKTSYARNSSLQKKASDTAKHITLETLQQLYKETRPKSLGIADLGCSSGPNTLSTITDFIKTVQVAHHREIPIQPLPEFSIFLNDLPGNDFNFIFKSLPDFHIELKRDNNNGDCPSVFIAAYPGSFYGRLFPENTIHFVYASHSLHWLSKVPTALYDEQGKSINKGCVSICSLSSEAVSKAYCSQFKEDFSIFLRCRSKEMVSAGRMVLIILGREGPDHVDRGNSFFWELLSRSIADLVAQGETEEEKLDSYDMHFYAPSADEIEGEVDKEGSFELERLEMLEVKKDKGNTEGDISYGKAVAKTVRAVQESMLVQHFGEKILDKLFDTYCRMVDDELAKEDIRPITFVVVLRKKL.

An S-adenosyl-L-homocysteine-binding site is contributed by Y21. A (11R)-carlactonoate-binding site is contributed by Q28. Residues C62, N67, D101, L102, S141, and F142 each contribute to the S-adenosyl-L-homocysteine site. Positions 162 and 163 each coordinate (11R)-carlactonoate. Residues N180, D266, Y268, and D269 each contribute to the Mg(2+) site.

It belongs to the methyltransferase superfamily. Type-7 methyltransferase family. SABATH subfamily. In terms of assembly, homodimer. Mg(2+) is required as a cofactor.

It carries out the reaction (11R)-carlactonoate + S-adenosyl-L-methionine = (11R)-methyl carlactonoate + S-adenosyl-L-homocysteine. Methyltransferase involved in the biosynthesis of strigolactone natural products, bioactive compounds promoting plant fitness and soil microbe interactions, but preventing shoot branching. Catalyzes the biosynthesis of (11R)-methyl carlactonoate (MeCLA) from (11R)-carlactonoate (CLA), downstream of MAX1; MeCLA is probably biologically active as a hormone regulating shoot branching and serves as a precursor of non-canonical strigolactones (SLs). This chain is Carlactonoate CLA methyltransferase, found in Arabidopsis thaliana (Mouse-ear cress).